We begin with the raw amino-acid sequence, 177 residues long: Ribosome maturation factor RimP (177 aa).

This sequence belongs to the RimP family.

The protein localises to the cytoplasm. In terms of biological role, required for maturation of 30S ribosomal subunits. The chain is Ribosome maturation factor RimP from Methylibium petroleiphilum (strain ATCC BAA-1232 / LMG 22953 / PM1).